Here is a 137-residue protein sequence, read N- to C-terminus: Large ribosomal subunit protein eL28 (137 aa).

Residue Ser-2 is modified to N-acetylserine. Glycyl lysine isopeptide (Lys-Gly) (interchain with G-Cter in SUMO2) cross-links involve residues Lys-58 and Lys-65. A Phosphoserine modification is found at Ser-115.

The protein belongs to the eukaryotic ribosomal protein eL28 family. As to quaternary structure, component of the large ribosomal subunit.

The protein localises to the cytoplasm. Its function is as follows. Component of the large ribosomal subunit. The ribosome is a large ribonucleoprotein complex responsible for the synthesis of proteins in the cell. The sequence is that of Large ribosomal subunit protein eL28 (Rpl28) from Mus musculus (Mouse).